We begin with the raw amino-acid sequence, 163 residues long: Inorganic pyrophosphatase (163 aa).

Glutamate 9 serves as a coordination point for Mg(2+). Residues lysine 17, arginine 31, and tyrosine 43 each coordinate substrate. Positions 53, 58, 85, and 90 each coordinate Mg(2+). Aspartate 90 serves as the catalytic Proton acceptor. A substrate-binding site is contributed by tyrosine 127.

The protein belongs to the PPase family. In terms of assembly, homohexamer. Requires Mg(2+) as cofactor.

The protein resides in the cytoplasm. It catalyses the reaction diphosphate + H2O = 2 phosphate + H(+). Its function is as follows. Catalyzes the hydrolysis of inorganic pyrophosphate (PPi) forming two phosphate ions. The protein is Inorganic pyrophosphatase of Leifsonia xyli subsp. xyli (strain CTCB07).